A 277-amino-acid chain; its full sequence is Putative thiosulfate sulfurtransferase (277 aa).

Rhodanese domains follow at residues Asp-18–Thr-125 and Ser-154–Glu-274. Cys-233 functions as the Cysteine persulfide intermediate in the catalytic mechanism. Substrate is bound at residue Arg-238.

The catalysed reaction is thiosulfate + hydrogen cyanide = thiocyanate + sulfite + 2 H(+). Its function is as follows. May be a sulfotransferase involved in the formation of thiosulfate. The polypeptide is Putative thiosulfate sulfurtransferase (cysA) (Mycobacterium leprae (strain TN)).